Reading from the N-terminus, the 375-residue chain is Dihydroorotate dehydrogenase (quinone) (375 aa).

Residues 78-82 and threonine 102 each bind FMN; that span reads AGLDK. Lysine 82 lines the substrate pocket. 127–131 lines the substrate pocket; that stretch reads NRMGF. FMN is bound by residues asparagine 159 and asparagine 192. Position 192 (asparagine 192) interacts with substrate. Serine 195 serves as the catalytic Nucleophile. Asparagine 197 serves as a coordination point for substrate. Residues lysine 230 and threonine 258 each contribute to the FMN site. Position 259–260 (259–260) interacts with substrate; the sequence is NT. FMN is bound by residues glycine 288, glycine 317, and 338–339; that span reads YT.

Belongs to the dihydroorotate dehydrogenase family. Type 2 subfamily. Monomer. FMN serves as cofactor.

It is found in the cell membrane. It carries out the reaction (S)-dihydroorotate + a quinone = orotate + a quinol. The protein operates within pyrimidine metabolism; UMP biosynthesis via de novo pathway; orotate from (S)-dihydroorotate (quinone route): step 1/1. Catalyzes the conversion of dihydroorotate to orotate with quinone as electron acceptor. This chain is Dihydroorotate dehydrogenase (quinone), found in Cyanothece sp. (strain PCC 7425 / ATCC 29141).